The primary structure comprises 115 residues: Large ribosomal subunit protein bL19 (115 aa).

This sequence belongs to the bacterial ribosomal protein bL19 family.

This protein is located at the 30S-50S ribosomal subunit interface and may play a role in the structure and function of the aminoacyl-tRNA binding site. The chain is Large ribosomal subunit protein bL19 from Streptococcus pyogenes serotype M1.